Consider the following 270-residue polypeptide: Formamidopyrimidine-DNA glycosylase (270 aa).

Proline 2 acts as the Schiff-base intermediate with DNA in catalysis. The active-site Proton donor is glutamate 3. Residue lysine 58 is the Proton donor; for beta-elimination activity of the active site. Histidine 91, arginine 110, and arginine 151 together coordinate DNA. The FPG-type zinc-finger motif lies at leucine 236–arginine 270. The Proton donor; for delta-elimination activity role is filled by arginine 260.

Belongs to the FPG family. Monomer. It depends on Zn(2+) as a cofactor.

It carries out the reaction Hydrolysis of DNA containing ring-opened 7-methylguanine residues, releasing 2,6-diamino-4-hydroxy-5-(N-methyl)formamidopyrimidine.. It catalyses the reaction 2'-deoxyribonucleotide-(2'-deoxyribose 5'-phosphate)-2'-deoxyribonucleotide-DNA = a 3'-end 2'-deoxyribonucleotide-(2,3-dehydro-2,3-deoxyribose 5'-phosphate)-DNA + a 5'-end 5'-phospho-2'-deoxyribonucleoside-DNA + H(+). Involved in base excision repair of DNA damaged by oxidation or by mutagenic agents. Acts as a DNA glycosylase that recognizes and removes damaged bases. Has a preference for oxidized purines, such as 7,8-dihydro-8-oxoguanine (8-oxoG). Has AP (apurinic/apyrimidinic) lyase activity and introduces nicks in the DNA strand. Cleaves the DNA backbone by beta-delta elimination to generate a single-strand break at the site of the removed base with both 3'- and 5'-phosphates. The protein is Formamidopyrimidine-DNA glycosylase of Stenotrophomonas maltophilia (strain R551-3).